A 193-amino-acid chain; its full sequence is Holliday junction branch migration complex subunit RuvA (193 aa).

Residues 1–64 (MIGRIAGTLI…EDAHLLYGFG (64 aa)) form a domain I region. The tract at residues 65 to 143 (TASERNTFRE…AELGHVPGTP (79 aa)) is domain II. The tract at residues 144–151 (AVPDSAVD) is flexible linker. Residues 151 to 193 (DVLNALLALGYSEKEAAAAIKQVPAGTGVSDGIKLALKALSKA) form a domain III region.

The protein belongs to the RuvA family. As to quaternary structure, homotetramer. Forms an RuvA(8)-RuvB(12)-Holliday junction (HJ) complex. HJ DNA is sandwiched between 2 RuvA tetramers; dsDNA enters through RuvA and exits via RuvB. An RuvB hexamer assembles on each DNA strand where it exits the tetramer. Each RuvB hexamer is contacted by two RuvA subunits (via domain III) on 2 adjacent RuvB subunits; this complex drives branch migration. In the full resolvosome a probable DNA-RuvA(4)-RuvB(12)-RuvC(2) complex forms which resolves the HJ.

It is found in the cytoplasm. The RuvA-RuvB-RuvC complex processes Holliday junction (HJ) DNA during genetic recombination and DNA repair, while the RuvA-RuvB complex plays an important role in the rescue of blocked DNA replication forks via replication fork reversal (RFR). RuvA specifically binds to HJ cruciform DNA, conferring on it an open structure. The RuvB hexamer acts as an ATP-dependent pump, pulling dsDNA into and through the RuvAB complex. HJ branch migration allows RuvC to scan DNA until it finds its consensus sequence, where it cleaves and resolves the cruciform DNA. The polypeptide is Holliday junction branch migration complex subunit RuvA (Cupriavidus necator (strain ATCC 17699 / DSM 428 / KCTC 22496 / NCIMB 10442 / H16 / Stanier 337) (Ralstonia eutropha)).